A 176-amino-acid polypeptide reads, in one-letter code: Large ribosomal subunit protein uL6 (176 aa).

Residues 156–170 are compositionally biased toward basic and acidic residues; it reads YKGKGVRYADEQVRR. Positions 156–176 are disordered; that stretch reads YKGKGVRYADEQVRRKEAKKK.

Belongs to the universal ribosomal protein uL6 family. In terms of assembly, part of the 50S ribosomal subunit.

This protein binds to the 23S rRNA, and is important in its secondary structure. It is located near the subunit interface in the base of the L7/L12 stalk, and near the tRNA binding site of the peptidyltransferase center. This chain is Large ribosomal subunit protein uL6, found in Shewanella woodyi (strain ATCC 51908 / MS32).